The sequence spans 134 residues: Small ribosomal subunit protein uS8c (134 aa).

Belongs to the universal ribosomal protein uS8 family. As to quaternary structure, part of the 30S ribosomal subunit.

The protein resides in the plastid. The protein localises to the chloroplast. In terms of biological role, one of the primary rRNA binding proteins, it binds directly to 16S rRNA central domain where it helps coordinate assembly of the platform of the 30S subunit. In Coffea arabica (Arabian coffee), this protein is Small ribosomal subunit protein uS8c (rps8).